Here is a 334-residue protein sequence, read N- to C-terminus: Ketol-acid reductoisomerase (NADP(+)) (334 aa).

Positions Met1–Thr181 constitute a KARI N-terminal Rossmann domain. Residues Tyr25–Gln28, Arg48, Ser52, and Asp82–Gln85 contribute to the NADP(+) site. The active site involves His107. Gly133 contacts NADP(+). A KARI C-terminal knotted domain is found at Thr182–Ile327. Mg(2+) is bound by residues Asp190, Glu194, Glu226, and Glu230. Ser251 is a binding site for substrate.

The protein belongs to the ketol-acid reductoisomerase family. The cofactor is Mg(2+).

It carries out the reaction (2R)-2,3-dihydroxy-3-methylbutanoate + NADP(+) = (2S)-2-acetolactate + NADPH + H(+). The catalysed reaction is (2R,3R)-2,3-dihydroxy-3-methylpentanoate + NADP(+) = (S)-2-ethyl-2-hydroxy-3-oxobutanoate + NADPH + H(+). Its pathway is amino-acid biosynthesis; L-isoleucine biosynthesis; L-isoleucine from 2-oxobutanoate: step 2/4. It participates in amino-acid biosynthesis; L-valine biosynthesis; L-valine from pyruvate: step 2/4. Involved in the biosynthesis of branched-chain amino acids (BCAA). Catalyzes an alkyl-migration followed by a ketol-acid reduction of (S)-2-acetolactate (S2AL) to yield (R)-2,3-dihydroxy-isovalerate. In the isomerase reaction, S2AL is rearranged via a Mg-dependent methyl migration to produce 3-hydroxy-3-methyl-2-ketobutyrate (HMKB). In the reductase reaction, this 2-ketoacid undergoes a metal-dependent reduction by NADPH to yield (R)-2,3-dihydroxy-isovalerate. This is Ketol-acid reductoisomerase (NADP(+)) from Staphylococcus aureus (strain Mu3 / ATCC 700698).